The chain runs to 539 residues: CTP synthase (539 aa).

The segment at 1-268 is amidoligase domain; the sequence is MADTKYIFVT…DETVLRKVGL (268 aa). A CTP-binding site is contributed by serine 15. Serine 15 provides a ligand contact to UTP. Residue 16–21 coordinates ATP; sequence SLGKGI. Tyrosine 56 contributes to the L-glutamine binding site. ATP is bound at residue aspartate 73. 2 residues coordinate Mg(2+): aspartate 73 and glutamate 143. Residues 150–152, 189–194, and lysine 225 each bind CTP; these read DIE and KTKPTQ. UTP is bound by residues 189-194 and lysine 225; that span reads KTKPTQ. The 243-residue stretch at 294-536 folds into the Glutamine amidotransferase type-1 domain; the sequence is TIALVGKYVE…IREAIKTRKK (243 aa). Glycine 356 is an L-glutamine binding site. Cysteine 383 acts as the Nucleophile; for glutamine hydrolysis in catalysis. L-glutamine-binding positions include 384-387, glutamate 407, and arginine 464; that span reads LGMQ. Active-site residues include histidine 509 and glutamate 511.

Belongs to the CTP synthase family. As to quaternary structure, homotetramer.

It carries out the reaction UTP + L-glutamine + ATP + H2O = CTP + L-glutamate + ADP + phosphate + 2 H(+). The catalysed reaction is L-glutamine + H2O = L-glutamate + NH4(+). The enzyme catalyses UTP + NH4(+) + ATP = CTP + ADP + phosphate + 2 H(+). Its pathway is pyrimidine metabolism; CTP biosynthesis via de novo pathway; CTP from UDP: step 2/2. With respect to regulation, allosterically activated by GTP, when glutamine is the substrate; GTP has no effect on the reaction when ammonia is the substrate. The allosteric effector GTP functions by stabilizing the protein conformation that binds the tetrahedral intermediate(s) formed during glutamine hydrolysis. Inhibited by the product CTP, via allosteric rather than competitive inhibition. Functionally, catalyzes the ATP-dependent amination of UTP to CTP with either L-glutamine or ammonia as the source of nitrogen. Regulates intracellular CTP levels through interactions with the four ribonucleotide triphosphates. The sequence is that of CTP synthase from Porphyromonas gingivalis (strain ATCC 33277 / DSM 20709 / CIP 103683 / JCM 12257 / NCTC 11834 / 2561).